The sequence spans 121 residues: Small ribosomal subunit protein uS13 (121 aa).

The interval 93-121 is disordered; sequence RGLPVRGQNTKNNARTRKGKATAIAGKKK. Basic residues predominate over residues 106-121; sequence ARTRKGKATAIAGKKK.

It belongs to the universal ribosomal protein uS13 family. In terms of assembly, part of the 30S ribosomal subunit. Forms a loose heterodimer with protein S19. Forms two bridges to the 50S subunit in the 70S ribosome.

In terms of biological role, located at the top of the head of the 30S subunit, it contacts several helices of the 16S rRNA. In the 70S ribosome it contacts the 23S rRNA (bridge B1a) and protein L5 of the 50S subunit (bridge B1b), connecting the 2 subunits; these bridges are implicated in subunit movement. Contacts the tRNAs in the A and P-sites. The polypeptide is Small ribosomal subunit protein uS13 (Streptococcus uberis (strain ATCC BAA-854 / 0140J)).